The sequence spans 195 residues: Glycerol-3-phosphate acyltransferase (195 aa).

5 helical membrane-spanning segments follow: residues 3-23, 53-73, 80-100, 115-135, and 147-167; these read IHAV…GLIL, AVMT…LAKI, FAFI…WLLF, LIEY…FAIF, and IFVA…VFIA.

The protein belongs to the PlsY family. As to quaternary structure, probably interacts with PlsX.

It localises to the cell inner membrane. The catalysed reaction is an acyl phosphate + sn-glycerol 3-phosphate = a 1-acyl-sn-glycero-3-phosphate + phosphate. Its pathway is lipid metabolism; phospholipid metabolism. Its function is as follows. Catalyzes the transfer of an acyl group from acyl-phosphate (acyl-PO(4)) to glycerol-3-phosphate (G3P) to form lysophosphatidic acid (LPA). This enzyme utilizes acyl-phosphate as fatty acyl donor, but not acyl-CoA or acyl-ACP. The polypeptide is Glycerol-3-phosphate acyltransferase (Ehrlichia chaffeensis (strain ATCC CRL-10679 / Arkansas)).